The following is a 1349-amino-acid chain: Protein turtle homolog B (1349 aa).

An N-terminal signal peptide occupies residues 1–20 (MIWYVATFIASVIGTRGLAA). The Extracellular segment spans residues 21–722 (EGAHGLREEP…DLTEDGLARP (702 aa)). 5 Ig-like domains span residues 24-129 (HGLR…HNGS), 139-226 (PTFT…LLVQ), 228-320 (PPFI…AYLT), 324-415 (PARV…ARLV), and 420-504 (PYFT…THLT). Intrachain disulfides connect cysteine 45–cysteine 113 and cysteine 161–cysteine 208. Asparagine 241 and asparagine 258 each carry an N-linked (GlcNAc...) asparagine glycan. Disulfide bonds link cysteine 250-cysteine 303, cysteine 346-cysteine 397, and cysteine 442-cysteine 488. 2 consecutive Fibronectin type-III domains span residues 512 to 604 (APGS…TLAF) and 614 to 708 (LVTP…STDI). A glycan (N-linked (GlcNAc...) asparagine) is linked at asparagine 624. Residues 723 to 743 (VLAGIVATICFLAAAILFSTL) form a helical membrane-spanning segment. Residues 744-1349 (AACFVNKQRK…SPPERALSKL (606 aa)) are Cytoplasmic-facing. 3 disordered regions span residues 758–817 (RKKD…EKEL), 911–1081 (QLTP…RGLP), and 1099–1349 (APKG…LSKL). Phosphoserine occurs at positions 775, 783, and 794. A compositionally biased stretch (polar residues) spans 911 to 921 (QLTPLSSSQES). Residues 985 to 998 (VPEVGSPLSSVMSS) show a composition bias toward low complexity. Composition is skewed to polar residues over residues 1018–1033 (ENAS…TPTG), 1129–1141 (LVSQ…TSQG), and 1199–1214 (SRLS…SRTG). At arginine 1136 the chain carries Omega-N-methylarginine. A phosphoserine mark is found at serine 1207 and serine 1215. Residues 1251-1271 (STPSTGSPSQSSRSGSPSYRP) show a composition bias toward low complexity. Pro residues predominate over residues 1283-1292 (PSPPPGPAPA).

It belongs to the immunoglobulin superfamily. Turtle family. In terms of assembly, found in a complex with MAGI2 and NLGN2, where it interacts with MAGI2 (via PDZ 5 and PDZ 6 domains). In terms of processing, N-glycosylated and sialylated. Not significantly O-glycosylated.

It is found in the postsynaptic cell membrane. Its subcellular location is the postsynaptic density. Transmembrane protein which is abundantly expressed in interneurons, where it may regulate inhibitory synapse development. May mediate homophilic cell adhesion. This is Protein turtle homolog B (IGSF9B) from Homo sapiens (Human).